The primary structure comprises 226 residues: Probable N-acetyl-alpha-D-glucosaminyl L-malate deacetylase 2 (226 aa).

Residues H13, D16, and H127 each coordinate Zn(2+).

It belongs to the PIGL family. It depends on Zn(2+) as a cofactor.

It catalyses the reaction (S)-malyl N-acetyl-alpha-D-glucosaminide + H2O = (S)-malyl alpha-D-glucosaminide + acetate. Involved in bacillithiol (BSH) biosynthesis. Catalyzes the second step of the pathway, the deacetylation of N-acetylglucosaminylmalate (GlcNAc-Mal) to glucosamine malate (GlcN-Mal). Could also be involved in bacillithiol-detoxifying pathways through formation of S-mercapturic adducts. In Bacillus anthracis, this protein is Probable N-acetyl-alpha-D-glucosaminyl L-malate deacetylase 2.